A 281-amino-acid chain; its full sequence is Acidic leucine-rich nuclear phosphoprotein 32-related protein (281 aa).

4 LRR repeats span residues 29-52 (YESL…EKEL), 56-78 (FKNL…IPSI), 79-103 (ATLN…IVQN), and 105-128 (PNIK…TLKE). One can recognise an LRRCT domain in the interval 140 to 178 (NPFADNPNYRKELFEFLPNVKIIDCYNKEGMEVLSSDEE). A compositionally biased stretch (acidic residues) spans 197–244 (FKDEDDEDEEFVPNDNEDDDEDDELDDDLEDEDMEDLDKEDLDKEDYD). The tract at residues 197 to 281 (FKDEDDEDEE…DMDLKKTKLE (85 aa)) is disordered. The segment covering 245–266 (IDTKETEGVNKDEKSNKRKQDA) has biased composition (basic and acidic residues).

It belongs to the ANP32 family.

In Plasmodium falciparum (isolate 3D7), this protein is Acidic leucine-rich nuclear phosphoprotein 32-related protein.